We begin with the raw amino-acid sequence, 153 residues long: 6,7-dimethyl-8-ribityllumazine synthase (153 aa).

5-amino-6-(D-ribitylamino)uracil-binding positions include F22, 56–58 (AFE), and 80–82 (TVI). 85–86 (ST) serves as a coordination point for (2S)-2-hydroxy-3-oxobutyl phosphate. H88 (proton donor) is an active-site residue. Residue F113 participates in 5-amino-6-(D-ribitylamino)uracil binding. A (2S)-2-hydroxy-3-oxobutyl phosphate-binding site is contributed by R127.

It belongs to the DMRL synthase family. Forms an icosahedral capsid composed of 60 subunits, arranged as a dodecamer of pentamers.

The enzyme catalyses (2S)-2-hydroxy-3-oxobutyl phosphate + 5-amino-6-(D-ribitylamino)uracil = 6,7-dimethyl-8-(1-D-ribityl)lumazine + phosphate + 2 H2O + H(+). It participates in cofactor biosynthesis; riboflavin biosynthesis; riboflavin from 2-hydroxy-3-oxobutyl phosphate and 5-amino-6-(D-ribitylamino)uracil: step 1/2. Functionally, catalyzes the formation of 6,7-dimethyl-8-ribityllumazine by condensation of 5-amino-6-(D-ribitylamino)uracil with 3,4-dihydroxy-2-butanone 4-phosphate. This is the penultimate step in the biosynthesis of riboflavin. In Actinobacillus pleuropneumoniae serotype 5b (strain L20), this protein is 6,7-dimethyl-8-ribityllumazine synthase.